The chain runs to 36 residues: EAPVTFTVEKGSDEKNLALSIKYNKEGDSMAEVELK.

It belongs to the expansin family. Expansin B subfamily.

Its subcellular location is the secreted. The sequence is that of Pollen allergen Dac g 2 from Dactylis glomerata (Orchard grass).